A 235-amino-acid chain; its full sequence is Ribonuclease PH (235 aa).

Residues Arg86 and Gly124 to Arg126 contribute to the phosphate site.

It belongs to the RNase PH family. In terms of assembly, homohexameric ring arranged as a trimer of dimers.

The catalysed reaction is tRNA(n+1) + phosphate = tRNA(n) + a ribonucleoside 5'-diphosphate. In terms of biological role, phosphorolytic 3'-5' exoribonuclease that plays an important role in tRNA 3'-end maturation. Removes nucleotide residues following the 3'-CCA terminus of tRNAs; can also add nucleotides to the ends of RNA molecules by using nucleoside diphosphates as substrates, but this may not be physiologically important. Probably plays a role in initiation of 16S rRNA degradation (leading to ribosome degradation) during starvation. In Francisella philomiragia subsp. philomiragia (strain ATCC 25017 / CCUG 19701 / FSC 153 / O#319-036), this protein is Ribonuclease PH.